The chain runs to 379 residues: Cell cycle checkpoint control protein RAD9A (379 aa).

Tyr-17 is modified (phosphotyrosine). A possesses 3'-5' exonuclease activity region spans residues 40–80 (FLFAPLFFQQYQAATPGQDLLRCKILMKSFLSVFRSLAMLE). The tract at residues 255 to 379 (SDTDSHSQDL…VLAEDSEGEG (125 aa)) is sufficient for interaction with ABL1. Residues 257–271 (TDSHSQDLGSPERHQ) are compositionally biased toward basic and acidic residues. Disordered regions lie at residues 257-289 (TDSH…DFAN) and 308-379 (SRVL…EGEG). A phosphoserine mark is found at Ser-261, Ser-266, Ser-317, Ser-330, Ser-363, Ser-368, and Ser-375.

This sequence belongs to the rad9 family. Component of the toroidal 9-1-1 (RAD9-RAD1-HUS1) complex, composed of RAD9A, RAD1 and HUS1. The 9-1-1 complex associates with LIG1, POLB, FEN1, RAD17, HDAC1, RPA1 and RPA2. The 9-1-1 complex associates with the RAD17-RFC complex. RAD9A interacts with BCL2L1, FEN1, RAD9B, ABL1, RPA1, ATAD5 and RPA2. Interacts with DNAJC7. Interacts (when phosphorylated) with TOPBP1. Post-translationally, constitutively phosphorylated on serine and threonine amino acids in absence of DNA damage. Hyperphosphorylated by PRKCD and ABL1 upon DNA damage. Its phosphorylation by PRKCD may be required for the formation of the 9-1-1 complex. Phosphorylated at Ser-330 and Ser-375 by CK2, promoting interaction with TOPBP1.

The protein resides in the nucleus. The enzyme catalyses Exonucleolytic cleavage in the 3'- to 5'-direction to yield nucleoside 5'-phosphates.. Functionally, component of the 9-1-1 cell-cycle checkpoint response complex that plays a major role in DNA repair. The 9-1-1 complex is recruited to DNA lesion upon damage by the RAD17-replication factor C (RFC) clamp loader complex. Acts then as a sliding clamp platform on DNA for several proteins involved in long-patch base excision repair (LP-BER). The 9-1-1 complex stimulates DNA polymerase beta (POLB) activity by increasing its affinity for the 3'-OH end of the primer-template and stabilizes POLB to those sites where LP-BER proceeds; endonuclease FEN1 cleavage activity on substrates with double, nick, or gap flaps of distinct sequences and lengths; and DNA ligase I (LIG1) on long-patch base excision repair substrates. The 9-1-1 complex is necessary for the recruitment of RHNO1 to sites of double-stranded breaks (DSB) occurring during the S phase. RAD9A possesses 3'-&gt;5' double stranded DNA exonuclease activity. This is Cell cycle checkpoint control protein RAD9A (RAD9A) from Macaca fascicularis (Crab-eating macaque).